A 353-amino-acid chain; its full sequence is Nif-specific regulatory protein (353 aa).

The region spanning 12–240 is the Sigma-54 factor interaction domain; that stretch reads IVGESAALKE…LQNCTQRTAT (229 aa). ATP-binding positions include 40–47 and 103–112; these read GESGTGKE and AHGGTLLLDE. Residues 325-344 constitute a DNA-binding region (H-T-H motif); it reads QAKAARLLGRTPRQVGYSLR.

Interacts with sigma-54.

Required for activation of most nif operons, which are directly involved in nitrogen fixation. This Rhizobium leguminosarum bv. trifolii protein is Nif-specific regulatory protein (nifA).